Here is a 338-residue protein sequence, read N- to C-terminus: Large ribosomal subunit protein uL10 (338 aa).

The segment covering 298-308 has biased composition (low complexity); sequence AAQQTQTQQST. The segment at 298–338 is disordered; it reads AAQQTQTQQSTAEEKKEEKKEEEKKGPSEEEIGSGLASLFG. Basic and acidic residues predominate over residues 309–325; the sequence is AEEKKEEKKEEEKKGPS.

The protein belongs to the universal ribosomal protein uL10 family. As to quaternary structure, part of the 50S ribosomal subunit. Forms part of the ribosomal stalk which helps the ribosome interact with GTP-bound translation factors. Forms a heptameric L10(L12)2(L12)2(L12)2 complex, where L10 forms an elongated spine to which the L12 dimers bind in a sequential fashion.

In terms of biological role, forms part of the ribosomal stalk, playing a central role in the interaction of the ribosome with GTP-bound translation factors. The protein is Large ribosomal subunit protein uL10 of Saccharolobus islandicus (strain M.16.27) (Sulfolobus islandicus).